A 346-amino-acid polypeptide reads, in one-letter code: Cell shape-determining protein MreC (346 aa).

Residues 89 to 118 (NRRLKAELAEMRQWRDRALALQDQNDRFKS) are a coiled coil. A disordered region spans residues 292-346 (SLPPVTTEDPQTSILSNPVSRPVAPTPSPATATPSAAPAARPATTATPPQTGAPR). Positions 299-308 (EDPQTSILSN) are enriched in polar residues. Residues 309 to 340 (PVSRPVAPTPSPATATPSAAPAARPATTATPP) are compositionally biased toward low complexity.

The protein belongs to the MreC family. As to quaternary structure, interacts with penicillin-binding proteins (PBP2, PBP1a, PBP1b, PBP2a and PBP2b). Interacts with outer membrane proteins belonging to the TonB-dependent receptor family of transport proteins.

It is found in the periplasm. Functionally, involved in formation and maintenance of cell shape. Required for the spatial organization of components of the peptidoglycan-synthesizing holoenzyme in the periplasm and peptidoglycan synthetic activity. This Caulobacter vibrioides (strain NA1000 / CB15N) (Caulobacter crescentus) protein is Cell shape-determining protein MreC.